We begin with the raw amino-acid sequence, 511 residues long: Probable cytochrome P450 4ac2 (511 aa).

Residues E318 and C455 each coordinate heme.

The protein belongs to the cytochrome P450 family. Requires heme as cofactor.

It localises to the endoplasmic reticulum membrane. It is found in the microsome membrane. In terms of biological role, may be involved in the metabolism of insect hormones and in the breakdown of synthetic insecticides. In Drosophila melanogaster (Fruit fly), this protein is Probable cytochrome P450 4ac2 (Cyp4ac2).